Here is a 125-residue protein sequence, read N- to C-terminus: MADLNAIVEQLSGLTIMEAAELVKQLEEKWGVSAAAAPVMVAAGGGAAAAAPVEEKTEFTVVLVDAGANKINVIKEVRAITGLGLKEAKDLVEGAPKEVKAGVAKAESEELKKKLEAAGAKVEVK.

It belongs to the bacterial ribosomal protein bL12 family. As to quaternary structure, homodimer. Part of the ribosomal stalk of the 50S ribosomal subunit. Forms a multimeric L10(L12)X complex, where L10 forms an elongated spine to which 2 to 4 L12 dimers bind in a sequential fashion. Binds GTP-bound translation factors.

Functionally, forms part of the ribosomal stalk which helps the ribosome interact with GTP-bound translation factors. Is thus essential for accurate translation. The polypeptide is Large ribosomal subunit protein bL12 (Anaeromyxobacter dehalogenans (strain 2CP-1 / ATCC BAA-258)).